Reading from the N-terminus, the 352-residue chain is Molybdenum import ATP-binding protein ModC (352 aa).

The 229-residue stretch at 1–229 (MLELNFSQTL…SVMNPWLPKE (229 aa)) folds into the ABC transporter domain. An ATP-binding site is contributed by 31 to 38 (GVSGAGKT). A Mop domain is found at 289-352 (QTSIRNVLRA…AQIKSVSITA (64 aa)).

It belongs to the ABC transporter superfamily. Molybdate importer (TC 3.A.1.8) family. In terms of assembly, the complex is composed of two ATP-binding proteins (ModC), two transmembrane proteins (ModB) and a solute-binding protein (ModA).

The protein resides in the cell inner membrane. It carries out the reaction molybdate(out) + ATP + H2O = molybdate(in) + ADP + phosphate + H(+). In terms of biological role, part of the ABC transporter complex ModABC involved in molybdenum import. Responsible for energy coupling to the transport system. This Shigella boydii serotype 4 (strain Sb227) protein is Molybdenum import ATP-binding protein ModC.